The sequence spans 261 residues: tRNA pseudouridine synthase A (261 aa).

The Nucleophile role is filled by D51. Residue Y109 coordinates substrate.

It belongs to the tRNA pseudouridine synthase TruA family. Homodimer.

It catalyses the reaction uridine(38/39/40) in tRNA = pseudouridine(38/39/40) in tRNA. Formation of pseudouridine at positions 38, 39 and 40 in the anticodon stem and loop of transfer RNAs. The polypeptide is tRNA pseudouridine synthase A (Shewanella baltica (strain OS223)).